The sequence spans 180 residues: Large ribosomal subunit protein uL5 (180 aa).

The protein belongs to the universal ribosomal protein uL5 family. As to quaternary structure, part of the 50S ribosomal subunit; part of the 5S rRNA/L5/L18/L25 subcomplex. Contacts the 5S rRNA and the P site tRNA. Forms a bridge to the 30S subunit in the 70S ribosome.

Functionally, this is one of the proteins that bind and probably mediate the attachment of the 5S RNA into the large ribosomal subunit, where it forms part of the central protuberance. In the 70S ribosome it contacts protein S13 of the 30S subunit (bridge B1b), connecting the 2 subunits; this bridge is implicated in subunit movement. Contacts the P site tRNA; the 5S rRNA and some of its associated proteins might help stabilize positioning of ribosome-bound tRNAs. In Chlamydia caviae (strain ATCC VR-813 / DSM 19441 / 03DC25 / GPIC) (Chlamydophila caviae), this protein is Large ribosomal subunit protein uL5.